A 249-amino-acid polypeptide reads, in one-letter code: Spindlin-4 (249 aa).

Tudor-like domain stretches follow at residues 41-90 (VGCR…LELH), 119-168 (VGKA…YTLL), and 201-246 (VGKQ…YGLV). Histone H3K4me3 and H3R8me2a binding regions lie at residues 80–85 (GKDSVY), Glu-128, and 237–239 (DIH).

This sequence belongs to the SPIN/STSY family. As to quaternary structure, interacts with C11orf84/SPINDOC. Associates with chromatin.

Its subcellular location is the cytoplasm. It is found in the nucleus. Binds to acetylated and methylated histones, including H3K4me3 and H4K20me3, probably acting as a histone reader that recognizes chromatin marks to mediate downstream cellular effects. Promotes canonical WNT signaling, and is involved in the down-regulation of cell proliferation. The protein is Spindlin-4 (Spin4) of Mus musculus (Mouse).